Reading from the N-terminus, the 525-residue chain is Chromosomal replication initiator protein DnaA (525 aa).

A domain I, interacts with DnaA modulators region spans residues 1-71 (MNDFWQHCSA…ADLAREFWNT (71 aa)). The interval 71–188 (TPIEVQFVLD…GEADSMYERS (118 aa)) is domain II. Residues 160–182 (AAAGRRTWRPGPGAAPANGGEAD) form a disordered region. A compositionally biased stretch (low complexity) spans 169-181 (PGPGAAPANGGEA). A domain III, AAA+ region region spans residues 189 to 405 (KLNPVLTFDN…GALRKILAYS (217 aa)). Residues glycine 233, glycine 235, lysine 236, and threonine 237 each contribute to the ATP site. The tract at residues 406–525 (KFHGREISIE…LHVLEQTLKG (120 aa)) is domain IV, binds dsDNA.

This sequence belongs to the DnaA family. Oligomerizes as a right-handed, spiral filament on DNA at oriC.

Its subcellular location is the cytoplasm. Functionally, plays an essential role in the initiation and regulation of chromosomal replication. ATP-DnaA binds to the origin of replication (oriC) to initiate formation of the DNA replication initiation complex once per cell cycle. Binds the DnaA box (a 9 base pair repeat at the origin) and separates the double-stranded (ds)DNA. Forms a right-handed helical filament on oriC DNA; dsDNA binds to the exterior of the filament while single-stranded (ss)DNA is stabiized in the filament's interior. The ATP-DnaA-oriC complex binds and stabilizes one strand of the AT-rich DNA unwinding element (DUE), permitting loading of DNA polymerase. After initiation quickly degrades to an ADP-DnaA complex that is not apt for DNA replication. Binds acidic phospholipids. This is Chromosomal replication initiator protein DnaA from Burkholderia cenocepacia (strain ATCC BAA-245 / DSM 16553 / LMG 16656 / NCTC 13227 / J2315 / CF5610) (Burkholderia cepacia (strain J2315)).